The chain runs to 199 residues: Recombination protein RecR (199 aa).

A C4-type zinc finger spans residues 58-73 (CKTCGNIDTQSPCTVC). A Toprim domain is found at 81-176 (AMIVVVADVA…KVTRLAHGVP (96 aa)).

This sequence belongs to the RecR family.

In terms of biological role, may play a role in DNA repair. It seems to be involved in an RecBC-independent recombinational process of DNA repair. It may act with RecF and RecO. The sequence is that of Recombination protein RecR from Bradyrhizobium sp. (strain BTAi1 / ATCC BAA-1182).